A 279-amino-acid chain; its full sequence is Proteasome subunit beta (279 aa).

Positions 1-53 are cleaved as a propeptide — removed in mature form; by autocatalysis; sequence MAAAFDPSGRLPDLFTSAGTSSFSAFLSMAAPELLPGRRPLPPGTAADLTPHA. The Nucleophile role is filled by T54.

Belongs to the peptidase T1B family. The 20S proteasome core is composed of 14 alpha and 14 beta subunits that assemble into four stacked heptameric rings, resulting in a barrel-shaped structure. The two inner rings, each composed of seven catalytic beta subunits, are sandwiched by two outer rings, each composed of seven alpha subunits. The catalytic chamber with the active sites is on the inside of the barrel. Has a gated structure, the ends of the cylinder being occluded by the N-termini of the alpha-subunits. Is capped by the proteasome-associated ATPase, ARC.

Its subcellular location is the cytoplasm. The enzyme catalyses Cleavage of peptide bonds with very broad specificity.. It functions in the pathway protein degradation; proteasomal Pup-dependent pathway. The formation of the proteasomal ATPase ARC-20S proteasome complex, likely via the docking of the C-termini of ARC into the intersubunit pockets in the alpha-rings, may trigger opening of the gate for substrate entry. Interconversion between the open-gate and close-gate conformations leads to a dynamic regulation of the 20S proteasome proteolysis activity. In terms of biological role, component of the proteasome core, a large protease complex with broad specificity involved in protein degradation. The polypeptide is Proteasome subunit beta (Salinispora arenicola (strain CNS-205)).